The following is a 1217-amino-acid chain: ATP-dependent helicase/nuclease subunit A (1217 aa).

In terms of domain architecture, UvrD-like helicase ATP-binding spans 10–475 (VIWTDAQWQS…IDLSQNFRSR (466 aa)). Residue 31 to 38 (AAAGSGKT) coordinates ATP. A UvrD-like helicase C-terminal domain is found at 476–786 (KEVLSTTNYI…RMMTIHSSKG (311 aa)).

The protein belongs to the helicase family. AddA subfamily. As to quaternary structure, heterodimer of AddA and AddB/RexB. Mg(2+) serves as cofactor.

It carries out the reaction Couples ATP hydrolysis with the unwinding of duplex DNA by translocating in the 3'-5' direction.. It catalyses the reaction ATP + H2O = ADP + phosphate + H(+). Its function is as follows. The heterodimer acts as both an ATP-dependent DNA helicase and an ATP-dependent, dual-direction single-stranded exonuclease. Recognizes the chi site generating a DNA molecule suitable for the initiation of homologous recombination. The AddA nuclease domain is required for chi fragment generation; this subunit has the helicase and 3' -&gt; 5' nuclease activities. This chain is ATP-dependent helicase/nuclease subunit A, found in Staphylococcus aureus (strain MSSA476).